The following is a 338-amino-acid chain: 1-aminocyclopropane-1-carboxylate deaminase (338 aa).

Lys51 carries the N6-(pyridoxal phosphate)lysine modification. The Nucleophile role is filled by Ser78.

It belongs to the ACC deaminase/D-cysteine desulfhydrase family. Homotrimer. The cofactor is pyridoxal 5'-phosphate.

The catalysed reaction is 1-aminocyclopropane-1-carboxylate + H2O = 2-oxobutanoate + NH4(+). In terms of biological role, catalyzes a cyclopropane ring-opening reaction, the irreversible conversion of 1-aminocyclopropane-1-carboxylate (ACC) to ammonia and alpha-ketobutyrate. Allows growth on ACC as a nitrogen source. The chain is 1-aminocyclopropane-1-carboxylate deaminase from Burkholderia pseudomallei (strain 1710b).